Here is an 877-residue protein sequence, read N- to C-terminus: DNA polymerase I (877 aa).

The 310-residue stretch at 1 to 310 (MKKKLVLIDG…FTLADRVTEE (310 aa)) folds into the 5'-3' exonuclease domain. The 3'-5' exonuclease domain occupies 311-465 (MLADKAALVV…ALERPFLDEL (155 aa)). Residues 469-877 (EQDRLLVELE…HYGSTWYDAK (409 aa)) form a polymerase region.

The protein belongs to the DNA polymerase type-A family. As to quaternary structure, single-chain monomer with multiple functions.

It carries out the reaction DNA(n) + a 2'-deoxyribonucleoside 5'-triphosphate = DNA(n+1) + diphosphate. In addition to polymerase activity, this DNA polymerase exhibits 3'-5' and 5'-3' exonuclease activity. The chain is DNA polymerase I (polA) from Bacillus caldotenax.